A 245-amino-acid polypeptide reads, in one-letter code: Ribonuclease PH (245 aa).

Phosphate contacts are provided by residues arginine 86 and 124–126 (GTR).

Belongs to the RNase PH family. Homohexameric ring arranged as a trimer of dimers.

It catalyses the reaction tRNA(n+1) + phosphate = tRNA(n) + a ribonucleoside 5'-diphosphate. Phosphorolytic 3'-5' exoribonuclease that plays an important role in tRNA 3'-end maturation. Removes nucleotide residues following the 3'-CCA terminus of tRNAs; can also add nucleotides to the ends of RNA molecules by using nucleoside diphosphates as substrates, but this may not be physiologically important. Probably plays a role in initiation of 16S rRNA degradation (leading to ribosome degradation) during starvation. In Bacillus cereus (strain B4264), this protein is Ribonuclease PH.